Reading from the N-terminus, the 225-residue chain is MSQSQFDPYVQNGGTTVAIAGDGFAILAGDTRSVNGYNINTRFQPRVHEVGDDLVIGASGFEADALALVKRIQQRIDLYHDNHERKMSAQSCACMVRTLLYGKRFFPYYVYTTVAGIDKEGKGEIYSFDPVGSYEREWCRAGGSAANFITPFLDNQVNLHNQYVPGSHGKERKPRRLLKLEEAMKITTDAFTSAGERHIEVGDSVLVKIITKEGVETRIIPLKKD.

The protein belongs to the peptidase T1B family. In terms of assembly, the 26S proteasome consists of a 20S proteasome core and two 19S regulatory subunits. The 20S proteasome core is composed of 28 subunits that are arranged in four stacked rings, resulting in a barrel-shaped structure. The two end rings are each formed by seven alpha subunits, and the two central rings are each formed by seven beta subunits. The catalytic chamber with the active sites is on the inside of the barrel.

The protein localises to the cytoplasm. It localises to the nucleus. Non-catalytic component of the proteasome, a multicatalytic proteinase complex which is characterized by its ability to cleave peptides with Arg, Phe, Tyr, Leu, and Glu adjacent to the leaving group at neutral or slightly basic pH. The proteasome has an ATP-dependent proteolytic activity. The sequence is that of Probable proteasome subunit beta type-6 (pam1) from Schizosaccharomyces pombe (strain 972 / ATCC 24843) (Fission yeast).